Here is a 96-residue protein sequence, read N- to C-terminus: Evasin P1078 (96 aa).

Positions 1–28 are cleaved as a signal peptide; it reads MAFNTITFLQWAVFVAILFNMNLHSASA. 3 cysteine pairs are disulfide-bonded: Cys48-Cys67, Cys52-Cys69, and Cys63-Cys80. Asn51 is a glycosylation site (N-linked (GlcNAc...) asparagine). Residue Asn74 is glycosylated (N-linked (GlcNAc...) asparagine).

It localises to the secreted. In terms of biological role, salivary chemokine-binding protein which binds to host chemokines CXCL1, CXCL2, CXCL3, CXCL5, CXCL6, CXCL11 and CXCL13. This Ixodes ricinus (Common tick) protein is Evasin P1078.